A 544-amino-acid chain; its full sequence is CTP synthase (544 aa).

The tract at residues 1-267 is amidoligase domain; the sequence is MAKFVFITGG…CREVLDVLDL (267 aa). Ser13 contacts CTP. Ser13 contacts UTP. Residues 14–19 and Asp71 contribute to the ATP site; that span reads SIGKGI. Mg(2+) contacts are provided by Asp71 and Glu141. Residues 148–150, 188–193, and Lys224 contribute to the CTP site; these read DIE and KTKPTQ. UTP contacts are provided by residues 188-193 and Lys224; that span reads KTKPTQ. In terms of domain architecture, Glutamine amidotransferase type-1 spans 292–534; the sequence is KVALVGKYIQ…IEAAQQRLPS (243 aa). Gly354 serves as a coordination point for L-glutamine. The active-site Nucleophile; for glutamine hydrolysis is the Cys381. Residues 382–385, Glu405, and Arg462 contribute to the L-glutamine site; that span reads LGMQ. Residues His507 and Glu509 contribute to the active site.

This sequence belongs to the CTP synthase family. In terms of assembly, homotetramer.

It carries out the reaction UTP + L-glutamine + ATP + H2O = CTP + L-glutamate + ADP + phosphate + 2 H(+). The catalysed reaction is L-glutamine + H2O = L-glutamate + NH4(+). It catalyses the reaction UTP + NH4(+) + ATP = CTP + ADP + phosphate + 2 H(+). It participates in pyrimidine metabolism; CTP biosynthesis via de novo pathway; CTP from UDP: step 2/2. With respect to regulation, allosterically activated by GTP, when glutamine is the substrate; GTP has no effect on the reaction when ammonia is the substrate. The allosteric effector GTP functions by stabilizing the protein conformation that binds the tetrahedral intermediate(s) formed during glutamine hydrolysis. Inhibited by the product CTP, via allosteric rather than competitive inhibition. Functionally, catalyzes the ATP-dependent amination of UTP to CTP with either L-glutamine or ammonia as the source of nitrogen. Regulates intracellular CTP levels through interactions with the four ribonucleotide triphosphates. The chain is CTP synthase from Parasynechococcus marenigrum (strain WH8102).